The chain runs to 259 residues: UDP-2,3-diacylglucosamine hydrolase (259 aa).

5 residues coordinate Mn(2+): D8, H10, D41, N79, and H114. 79–80 (NR) serves as a coordination point for substrate. Substrate-binding residues include D122, S160, N164, K167, and H195. 2 residues coordinate Mn(2+): H195 and H197.

This sequence belongs to the LpxH family. Mn(2+) is required as a cofactor.

The protein resides in the cell inner membrane. It catalyses the reaction UDP-2-N,3-O-bis[(3R)-3-hydroxytetradecanoyl]-alpha-D-glucosamine + H2O = 2-N,3-O-bis[(3R)-3-hydroxytetradecanoyl]-alpha-D-glucosaminyl 1-phosphate + UMP + 2 H(+). Its pathway is glycolipid biosynthesis; lipid IV(A) biosynthesis; lipid IV(A) from (3R)-3-hydroxytetradecanoyl-[acyl-carrier-protein] and UDP-N-acetyl-alpha-D-glucosamine: step 4/6. In terms of biological role, hydrolyzes the pyrophosphate bond of UDP-2,3-diacylglucosamine to yield 2,3-diacylglucosamine 1-phosphate (lipid X) and UMP by catalyzing the attack of water at the alpha-P atom. Involved in the biosynthesis of lipid A, a phosphorylated glycolipid that anchors the lipopolysaccharide to the outer membrane of the cell. In Edwardsiella ictaluri (strain 93-146), this protein is UDP-2,3-diacylglucosamine hydrolase.